Consider the following 427-residue polypeptide: UDP-N-acetylglucosamine 1-carboxyvinyltransferase 1 (427 aa).

24 to 25 is a phosphoenolpyruvate binding site; it reads KN. Arg97 serves as a coordination point for UDP-N-acetyl-alpha-D-glucosamine. Cys121 serves as the catalytic Proton donor. At Cys121 the chain carries 2-(S-cysteinyl)pyruvic acid O-phosphothioketal. UDP-N-acetyl-alpha-D-glucosamine is bound by residues 126–130, Asp309, and Val331; that span reads RPIDL.

Belongs to the EPSP synthase family. MurA subfamily.

The protein resides in the cytoplasm. It carries out the reaction phosphoenolpyruvate + UDP-N-acetyl-alpha-D-glucosamine = UDP-N-acetyl-3-O-(1-carboxyvinyl)-alpha-D-glucosamine + phosphate. It participates in cell wall biogenesis; peptidoglycan biosynthesis. Cell wall formation. Adds enolpyruvyl to UDP-N-acetylglucosamine. This Lactococcus lactis subsp. lactis (strain IL1403) (Streptococcus lactis) protein is UDP-N-acetylglucosamine 1-carboxyvinyltransferase 1.